The sequence spans 322 residues: Pre-mRNA-splicing factor NTR2 (322 aa).

A disordered region spans residues 1–30; sequence MAIKKRNKIRLPSGSPEEVGIDGSAHKPMQ. Serine 40 carries the phosphoserine modification. The interval 113-137 is disordered; sequence LLSDSSEAGSSSEGEHISSIPTRGE. Residues 115–132 show a composition bias toward low complexity; it reads SDSSEAGSSSEGEHISSI. Serine 153 and serine 197 each carry phosphoserine.

Component of the NTR complex (NTC-related complex), composed of NTR1, NTR2 and PRP43. Interacts with CLF1, NTR1 and PRP43.

Its subcellular location is the cytoplasm. It localises to the nucleus. Its function is as follows. Involved in pre-mRNA splicing and spliceosome disassembly. Promotes release of excised lariat intron from the spliceosome by acting as a receptor for PRP43. This targeting of PRP43 leads to disassembly of the spliceosome with the separation of the U2, U5, U6 snRNPs and the NTC complex. In Saccharomyces cerevisiae (strain ATCC 204508 / S288c) (Baker's yeast), this protein is Pre-mRNA-splicing factor NTR2 (NTR2).